Consider the following 85-residue polypeptide: MKVTLIAILTCAAVLVLRTTAAEELEAESQLMEVGMPDTELAAVDEERLFECSVSCEIEKEGNKDCKKKKCKGGWKCKFNMCVKV.

Residues 1–22 (MKVTLIAILTCAAVLVLRTTAA) form the signal peptide. Positions 23 to 48 (EELEAESQLMEVGMPDTELAAVDEER) are excised as a propeptide. Intrachain disulfides connect C52–C66, C56–C77, and C71–C82.

It belongs to the neurotoxin 12 (Hwtx-2) family. 02 (Hwtx-2) subfamily. As to quaternary structure, monomer. In terms of tissue distribution, expressed by the venom gland.

It localises to the secreted. Functionally, neurotoxin active on both insects and mammals. The protein is U4-theraphotoxin-Hhn1a of Cyriopagopus hainanus (Chinese bird spider).